Here is a 173-residue protein sequence, read N- to C-terminus: Mediator of RNA polymerase II transcription subunit 10 (173 aa).

Residues 1–10 (MVQQQQQSQQ) are compositionally biased toward low complexity. The interval 1-42 (MVQQQQQSQQRMMELHERNDREKLARKTEKEREEERRKQEDD) is disordered. The span at 13–42 (MELHERNDREKLARKTEKEREEERRKQEDD) shows a compositional bias: basic and acidic residues.

This sequence belongs to the Mediator complex subunit 10 family. Component of the Mediator complex.

Its subcellular location is the nucleus. Functionally, component of the Mediator complex, a coactivator involved in the regulated transcription of nearly all RNA polymerase II-dependent genes. Mediator functions as a bridge to convey information from gene-specific regulatory proteins to the basal RNA polymerase II transcription machinery. Mediator is recruited to promoters by direct interactions with regulatory proteins and serves as a scaffold for the assembly of a functional preinitiation complex with RNA polymerase II and the general transcription factors. Required for germ cell development and for transcriptional activation of certain stage-specific inducible promoters. This is Mediator of RNA polymerase II transcription subunit 10 (mdt-10) from Caenorhabditis elegans.